The primary structure comprises 263 residues: MSKIFGIVNITTDSFSDGGLYLDTDKAIEHALHLVEDGADVIDLGAASSNPDTTEVGVVEEIKRLKPVIKALKEKGISISVDTFKPEVQSFCIEQKVDFINDIQGFPYPEIYSGLAKSDCKLVLMHSVQRIGAATKVETNPEEVFTSMMEFFKERIAALVEAGVKRERIILDPGMGFFLGSNPETSILVLKRFPEIQEAFNLQVMIAVSRKSFLGKITGTDVKSRLAPTLAAEMYAYKKGADYLRTHDVKSLSDALKISKALG.

The Pterin-binding domain maps to 2–257 (SKIFGIVNIT…DVKSLSDALK (256 aa)). Asparagine 9 is a binding site for Mg(2+). A 4-aminobenzoate-binding site is contributed by serine 49. Positions 82, 101, and 172 each coordinate (7,8-dihydropterin-6-yl)methyl diphosphate. Asparagine 101 and aspartate 172 together coordinate 6-hydroxymethyl-7,8-dihydropterin. Phenylalanine 177 contacts 4-aminobenzoate. Lysine 211 lines the (7,8-dihydropterin-6-yl)methyl diphosphate pocket. Lysine 211 serves as a coordination point for 6-hydroxymethyl-7,8-dihydropterin. 4-aminobenzoate is bound at residue serine 212. 245 to 247 (RTH) lines the (7,8-dihydropterin-6-yl)methyl diphosphate pocket.

The protein belongs to the DHPS family. Mg(2+) serves as cofactor.

The catalysed reaction is (7,8-dihydropterin-6-yl)methyl diphosphate + 4-aminobenzoate = 7,8-dihydropteroate + diphosphate. It participates in cofactor biosynthesis; tetrahydrofolate biosynthesis; 7,8-dihydrofolate from 2-amino-4-hydroxy-6-hydroxymethyl-7,8-dihydropteridine diphosphate and 4-aminobenzoate: step 1/2. Its function is as follows. Catalyzes the condensation of para-aminobenzoate (pABA) with 6-hydroxymethyl-7,8-dihydropterin diphosphate (DHPt-PP) to form 7,8-dihydropteroate (H2Pte), the immediate precursor of folate derivatives. Confers resistance to sulfonamide antibiotics, including sulfamethoxazole (SMX), sulfadiazine and sulfisoxazole. The polypeptide is Dihydropteroate synthase type-3 (Escherichia coli).